The chain runs to 371 residues: Pyruvate dehydrogenase E1 component subunit alpha (371 aa).

In terms of assembly, heterodimer of an alpha and a beta chain. It depends on thiamine diphosphate as a cofactor.

It catalyses the reaction N(6)-[(R)-lipoyl]-L-lysyl-[protein] + pyruvate + H(+) = N(6)-[(R)-S(8)-acetyldihydrolipoyl]-L-lysyl-[protein] + CO2. Its activity is regulated as follows. Activity of the E1 module is inhibited by the pyruvate dehydrogenase inhibitor PdhI. The pyruvate dehydrogenase complex catalyzes the overall conversion of pyruvate to acetyl-CoA and CO(2). It contains multiple copies of three enzymatic components: pyruvate dehydrogenase (E1), dihydrolipoamide acetyltransferase (E2) and lipoamide dehydrogenase (E3). In terms of biological role, the B.subtilis PDH complex also possesses branched-chain 2-oxoacid dehydrogenase (BCDH) activity. The polypeptide is Pyruvate dehydrogenase E1 component subunit alpha (Bacillus subtilis (strain 168)).